We begin with the raw amino-acid sequence, 320 residues long: Cytochrome f (320 aa).

An N-terminal signal peptide occupies residues 1-35; that stretch reads MQTRKTLSWIKEEITRSISVSLMIYIITGAYISNA. Positions 36, 56, 59, and 60 each coordinate heme. Residues 286 to 306 form a helical membrane-spanning segment; it reads VQGLLFFLASVILAQIFLVLK.

It belongs to the cytochrome f family. In terms of assembly, the 4 large subunits of the cytochrome b6-f complex are cytochrome b6, subunit IV (17 kDa polypeptide, petD), cytochrome f and the Rieske protein, while the 4 small subunits are PetG, PetL, PetM and PetN. The complex functions as a dimer. Heme serves as cofactor.

It localises to the plastid. It is found in the chloroplast thylakoid membrane. Its function is as follows. Component of the cytochrome b6-f complex, which mediates electron transfer between photosystem II (PSII) and photosystem I (PSI), cyclic electron flow around PSI, and state transitions. The polypeptide is Cytochrome f (Populus alba (White poplar)).